Consider the following 68-residue polypeptide: Large ribosomal subunit protein bL31 (68 aa).

Residues Cys16, Cys18, Cys36, and Cys39 each coordinate Zn(2+).

This sequence belongs to the bacterial ribosomal protein bL31 family. Type A subfamily. In terms of assembly, part of the 50S ribosomal subunit. Zn(2+) is required as a cofactor.

In terms of biological role, binds the 23S rRNA. This is Large ribosomal subunit protein bL31 from Lachnospira eligens (strain ATCC 27750 / DSM 3376 / VPI C15-48 / C15-B4) (Eubacterium eligens).